Consider the following 208-residue polypeptide: Small ribosomal subunit protein uS4 (208 aa).

The 65-residue stretch at 95-159 folds into the S4 RNA-binding domain; the sequence is RRIDNIVYRA…FKKLVRSNIE (65 aa).

Belongs to the universal ribosomal protein uS4 family. As to quaternary structure, part of the 30S ribosomal subunit. Contacts protein S5. The interaction surface between S4 and S5 is involved in control of translational fidelity.

Functionally, one of the primary rRNA binding proteins, it binds directly to 16S rRNA where it nucleates assembly of the body of the 30S subunit. With S5 and S12 plays an important role in translational accuracy. This Borrelia recurrentis (strain A1) protein is Small ribosomal subunit protein uS4.